The sequence spans 99 residues: Large ribosomal subunit protein uL23 (99 aa).

This sequence belongs to the universal ribosomal protein uL23 family. Part of the 50S ribosomal subunit. Contacts protein L29, and trigger factor when it is bound to the ribosome.

One of the early assembly proteins it binds 23S rRNA. One of the proteins that surrounds the polypeptide exit tunnel on the outside of the ribosome. Forms the main docking site for trigger factor binding to the ribosome. This Saccharopolyspora erythraea (strain ATCC 11635 / DSM 40517 / JCM 4748 / NBRC 13426 / NCIMB 8594 / NRRL 2338) protein is Large ribosomal subunit protein uL23.